A 923-amino-acid polypeptide reads, in one-letter code: Helicase POLQ-like (923 aa).

Residues 1–84 (MNRTPIRRCK…STVTPIQQKI (84 aa)) are disordered. A compositionally biased stretch (low complexity) spans 43–55 (STSPQSPSSSTEN). One can recognise a Helicase ATP-binding domain in the interval 178 to 349 (DKRLLDGENC…ALRAFVYSTN (172 aa)). 191–198 (LPTGAGKT) lines the ATP pocket. The DEAH box signature appears at 295-298 (DELH). The region spanning 392–596 (GICQLLAKLI…CVVLKLAENI (205 aa)) is the Helicase C-terminal domain.

This sequence belongs to the helicase family. SKI2 subfamily.

It localises to the nucleus. The protein resides in the chromosome. The enzyme catalyses Couples ATP hydrolysis with the unwinding of duplex DNA by translocating in the 3'-5' direction.. It carries out the reaction ATP + H2O = ADP + phosphate + H(+). Its function is as follows. Single-stranded 3'-5' DNA helicase that plays a key role in homology-driven double-strand break (DSB) repair. Involved in different DSB repair mechanisms that are guided by annealing of extensive stretches of complementary bases at break ends, such as microhomology-mediated end-joining (MMEJ), single-strand annealing (SSA) or synthesis-dependent strand annealing (SDSA). In Caenorhabditis elegans, this protein is Helicase POLQ-like.